The sequence spans 252 residues: Large ribosomal subunit protein uL29m (252 aa).

Lys146 is subject to N6-acetyllysine. Positions 230-240 are enriched in basic residues; sequence KKKEKILHAKF. The interval 230–252 is disordered; it reads KKKEKILHAKFPHLSQERKSSSV.

This sequence belongs to the universal ribosomal protein uL29 family. Component of the mitochondrial ribosome large subunit (39S) which comprises a 16S rRNA and about 50 distinct proteins.

Its subcellular location is the mitochondrion. This chain is Large ribosomal subunit protein uL29m (Mrpl47), found in Mus musculus (Mouse).